Consider the following 100-residue polypeptide: Pancreatic polypeptide prohormone (100 aa).

The N-terminal stretch at 1–29 (MAVAYCCLSLFLVSTWVALLLQPLQGTWG) is a signal peptide. Tyrosine amide is present on Y65.

It belongs to the NPY family. Post-translationally, no icosapeptide-like peptide is cleaved from the C-terminal.

It localises to the secreted. In terms of biological role, hormone secreted by pancreatic cells that acts as a regulator of pancreatic and gastrointestinal functions probably by signaling through the G protein-coupled receptor NPY4R2. The protein is Pancreatic polypeptide prohormone (Ppy) of Mus musculus (Mouse).